Consider the following 1069-residue polypeptide: DNA annealing helicase and endonuclease ZRANB3 (1069 aa).

A Helicase ATP-binding domain is found at 46 to 208 (VFALRRDGRC…FMQIEALFPQ (163 aa)). A DNA annealing helicase activity region spans residues 46-481 (VFALRRDGRC…GRKEKLQATE (436 aa)). An ATP-binding site is contributed by 59-66 (DEMGLGKT). A DEAH box motif is present at residues 157–160 (DESH). A Helicase C-terminal domain is found at 325-485 (AVKDYIKMLL…KLQATEDDKE (161 aa)). The PIP-box motif lies at 518 to 525 (QHDIRSFF). The RanBP2-type zinc-finger motif lies at 617 to 646 (PEKGWQCGFCTFLNNPGLPYCEMCENPRSR). The interval 648-720 (AGRNHLQDNN…PEIGQLNNSG (73 aa)) is disordered. 2 stretches are compositionally biased toward basic and acidic residues: residues 652–661 (HLQDNNKNDE) and 677–707 (ECERQCPERLEAEQSANSKEEALEGGGEDRL). The HNH domain occupies 1001–1041 (PGEGHFWQVDHIRPVYEGGGQCSLDNLQTLCTVCHKERTAQ). The endonuclease activity stretch occupies residues 1001–1069 (PGEGHFWQVD…SDITRFLVKK (69 aa)). An APIM motif motif is present at residues 1064–1068 (RFLVK).

Belongs to the SNF2/RAD54 helicase family. In terms of assembly, interacts (via PIP-box and RanBP2-type zinc finger) with PCNA (when PCNA is polyubiquitinated via 'Lys-63'-linked polyubiquitin).

The protein localises to the nucleus. Its subcellular location is the chromosome. Functionally, DNA annealing helicase and endonuclease required to maintain genome stability at stalled or collapsed replication forks by facilitating fork restart and limiting inappropriate recombination that could occur during template switching events. Recruited to the sites of stalled DNA replication by polyubiquitinated PCNA and acts as a structure-specific endonuclease that cleaves the replication fork D-loop intermediate, generating an accessible 3'-OH group in the template of the leading strand, which is amenable to extension by DNA polymerase. In addition to endonuclease activity, also catalyzes the fork regression via annealing helicase activity in order to prevent disintegration of the replication fork and the formation of double-strand breaks. This Mus musculus (Mouse) protein is DNA annealing helicase and endonuclease ZRANB3 (Zranb3).